Here is a 380-residue protein sequence, read N- to C-terminus: Maintenance of mitochondrial morphology protein 1 (380 aa).

Residues 1–64 (MQGRAIWAEG…IVPSLSFIQG (64 aa)) lie on the Lumenal side of the membrane. A helical transmembrane segment spans residues 65–85 (FMAGQAVLLMLFLGLFRYFFM). The Cytoplasmic segment spans residues 86-380 (TSSPGTRAQQ…IGTSPADPLA (295 aa)). An SMP-LTD domain is found at 147 to 369 (APESLDWLNV…WPHFWHIPLP (223 aa)).

The protein belongs to the MMM1 family. In terms of assembly, homodimer. Component of the ER-mitochondria encounter structure (ERMES) or MDM complex, composed of MMM1, MDM10, MDM12 and MDM34. An MMM1 homodimer associates with one molecule of MDM12 on each side in a pairwise head-to-tail manner, and the SMP-LTD domains of MMM1 and MDM12 generate a continuous hydrophobic tunnel for phospholipid trafficking.

It is found in the endoplasmic reticulum membrane. Component of the ERMES/MDM complex, which serves as a molecular tether to connect the endoplasmic reticulum (ER) and mitochondria. Components of this complex are involved in the control of mitochondrial shape and protein biogenesis, and function in nonvesicular lipid trafficking between the ER and mitochondria. The MDM12-MMM1 subcomplex functions in the major beta-barrel assembly pathway that is responsible for biogenesis of all outer membrane beta-barrel proteins, and acts in a late step after the SAM complex. The MDM10-MDM12-MMM1 subcomplex further acts in the TOM40-specific pathway after the action of the MDM12-MMM1 complex. Essential for establishing and maintaining the structure of mitochondria and maintenance of mtDNA nucleoids. This chain is Maintenance of mitochondrial morphology protein 1, found in Malassezia globosa (strain ATCC MYA-4612 / CBS 7966) (Dandruff-associated fungus).